A 529-amino-acid chain; its full sequence is Phenylalanine N-monooxygenase (529 aa).

A helical membrane pass occupies residues 1-21 (MLDSTPMLAFIIGLLLLALTM). Cys-467 serves as a coordination point for heme.

The protein belongs to the cytochrome P450 family. Requires heme as cofactor.

Its subcellular location is the endoplasmic reticulum membrane. The catalysed reaction is L-phenylalanine + 2 reduced [NADPH--hemoprotein reductase] + 2 O2 = (E)-phenylacetaldehyde oxime + 2 oxidized [NADPH--hemoprotein reductase] + CO2 + 3 H2O + 2 H(+). Its pathway is secondary metabolite biosynthesis; phenylglucosinolate biosynthesis. Functionally, converts L-phenylalanine into phenylacetaldoxime, the precursor of benzylglucosinolate (glucotropeolin). This Arabidopsis thaliana (Mouse-ear cress) protein is Phenylalanine N-monooxygenase (CYP79A2).